Here is a 170-residue protein sequence, read N- to C-terminus: Putative calmodulin-like protein 6 (170 aa).

EF-hand domains follow at residues 8-43, 44-79, 84-119, and 120-155; these read QQIS…LGMA, PSQE…KLYE, DDEE…LGEE, and MTED…TWNI. Ca(2+) contacts are provided by D21, N23, D25, C27, E32, D57, D59, N61, T63, E68, D97, D99, N101, E108, D133, N135, D137, Q139, and E144.

It belongs to the calmodulin family.

In terms of biological role, potential calcium sensor. This chain is Putative calmodulin-like protein 6 (CML6), found in Oryza sativa subsp. japonica (Rice).